The primary structure comprises 312 residues: Putative endonuclease 4 (312 aa).

Residues His-84, His-127, Glu-166, Asp-202, His-205, His-239, Asp-252, His-254, and Glu-284 each coordinate Zn(2+).

This sequence belongs to the AP endonuclease 2 family. The cofactor is Zn(2+).

It catalyses the reaction Endonucleolytic cleavage to 5'-phosphooligonucleotide end-products.. Its function is as follows. Endonuclease IV plays a role in DNA repair. It cleaves phosphodiester bonds at apurinic or apyrimidinic sites (AP sites) to produce new 5'-ends that are base-free deoxyribose 5-phosphate residues. The polypeptide is Putative endonuclease 4 (Acanthamoeba polyphaga (Amoeba)).